The chain runs to 252 residues: Ribonuclease 3 (252 aa).

In terms of domain architecture, RNase III spans 3-125 (LATLETRLDH…IFGAAFLDGG (123 aa)). Glutamate 38 lines the Mg(2+) pocket. Residue aspartate 42 is part of the active site. Mg(2+)-binding residues include aspartate 111 and glutamate 114. The active site involves glutamate 114. Residues 152-222 (DAKTLLQEFL…AKLALEAAQA (71 aa)) enclose the DRBM domain.

It belongs to the ribonuclease III family. As to quaternary structure, homodimer. Requires Mg(2+) as cofactor.

The protein resides in the cytoplasm. It catalyses the reaction Endonucleolytic cleavage to 5'-phosphomonoester.. Its function is as follows. Digests double-stranded RNA. Involved in the processing of primary rRNA transcript to yield the immediate precursors to the large and small rRNAs (23S and 16S). Processes some mRNAs, and tRNAs when they are encoded in the rRNA operon. Processes pre-crRNA and tracrRNA of type II CRISPR loci if present in the organism. This chain is Ribonuclease 3, found in Bordetella petrii (strain ATCC BAA-461 / DSM 12804 / CCUG 43448).